The chain runs to 146 residues: Probable actin-related protein 2/3 complex subunit 5 (146 aa).

The protein belongs to the ARPC5 family. In terms of assembly, component of the Arp2/3 complex composed of ARP2, ARP3, ARPC1B/p41-ARC, ARPC2/p34-ARC, ARPC3/p21-ARC, ARPC4/p20-ARC and ARPC5/p16-ARC.

The protein localises to the cytoplasm. Its subcellular location is the cytoskeleton. Its function is as follows. Functions as a component of the Arp2/3 complex which is involved in regulation of actin polymerization and together with an activating nucleation-promoting factor (NPF) mediates the formation of branched actin networks. This is Probable actin-related protein 2/3 complex subunit 5 from Caenorhabditis elegans.